The following is a 28-amino-acid chain: MRQFEFEAKASNSINRFYFGFGNESFWS.

It is found in the host cytoplasm. The protein resides in the host cytoskeleton. In terms of biological role, plays a role in the reorganization of host microtubules and intermediate filaments to form a cytoskeletal cage that surrounds the viral factories, protecting the site of viral replication. May play a role in viral infection of human cortical neurons. This Zika virus (isolate ZIKV/Human/French Polynesia/10087PF/2013) (ZIKV) protein is uORF1 protein.